Reading from the N-terminus, the 588-residue chain is Intracellular maltogenic amylase (588 aa).

Ca(2+) is bound by residues Asn149, Ser155, Gly174, and Asp176. Residues His249 and Arg325 each contribute to the substrate site. The Nucleophile role is filled by Asp327. Catalysis depends on Glu356, which acts as the Proton donor. Substrate-binding positions include 422–423 (HD), Asp467, and Arg471.

This sequence belongs to the glycosyl hydrolase 13 family. BbmA subfamily. As to quaternary structure, monomer or homodimer; in equilibrium. The cofactor is Ca(2+).

The protein localises to the cytoplasm. Hydrolyzes beta-cyclodextrin to maltose and glucose, soluble starch to maltose and glucose, and pullulan to panose with trace amounts of maltose and glucose. It is also able to hydrolyze acarbose. Can also exhibit a transglycosylation activity transferring glucose or maltose to another moiety of sugars by forming alpha-(1,6)- and alpha-(1,3)-glycosidic linkages upon the hydrolysis of substrate at concentrations of 5% or higher. The polypeptide is Intracellular maltogenic amylase (bbmA) (Bacillus subtilis).